The chain runs to 92 residues: Small ribosomal subunit protein uS19 (92 aa).

This sequence belongs to the universal ribosomal protein uS19 family.

Protein S19 forms a complex with S13 that binds strongly to the 16S ribosomal RNA. This Rhodopseudomonas palustris (strain BisA53) protein is Small ribosomal subunit protein uS19.